The sequence spans 501 residues: Glycerol kinase (501 aa).

Residue T17 coordinates ADP. Residues T17, T18, and S19 each contribute to the ATP site. Residue T17 participates in sn-glycerol 3-phosphate binding. Position 21 (R21) interacts with ADP. Residues R87, E88, Y139, and D243 each coordinate sn-glycerol 3-phosphate. Glycerol contacts are provided by R87, E88, Y139, D243, and Q244. 2 residues coordinate ADP: T265 and G308. ATP contacts are provided by T265, G308, Q312, and G409. Residues G409 and N413 each coordinate ADP.

This sequence belongs to the FGGY kinase family.

The enzyme catalyses glycerol + ATP = sn-glycerol 3-phosphate + ADP + H(+). Its pathway is polyol metabolism; glycerol degradation via glycerol kinase pathway; sn-glycerol 3-phosphate from glycerol: step 1/1. Its activity is regulated as follows. Inhibited by fructose 1,6-bisphosphate (FBP). Its function is as follows. Key enzyme in the regulation of glycerol uptake and metabolism. Catalyzes the phosphorylation of glycerol to yield sn-glycerol 3-phosphate. The chain is Glycerol kinase from Pseudomonas fluorescens (strain ATCC BAA-477 / NRRL B-23932 / Pf-5).